Here is a 594-residue protein sequence, read N- to C-terminus: Golgi-associated RAB2 interactor protein 4 (594 aa).

The tract at residues 390–525 is disordered; that stretch reads AAGLPVSTRQ…SSGSSKRLGR (136 aa). The segment covering 396 to 406 has biased composition (polar residues); the sequence is STRQSKSSLSG. Basic and acidic residues-rich tracts occupy residues 408–433, 442–455, and 468–477; these read HGRERTQASAEACKEGRERREKDKAL, TGESRHKTRGDKIA, and ASRDGKKEKG. Residues 510–521 are compositionally biased toward low complexity; sequence RSSSTTSSGSSK.

Belongs to the GARIN family. In terms of assembly, interacts (via N-terminus) with RAB2B (in GTP-bound form).

The protein resides in the golgi apparatus. RAB2B effector protein required for the compacted Golgi morphology, probably through interaction with small GTPase RAB2B. The sequence is that of Golgi-associated RAB2 interactor protein 4 (GARIN4) from Macaca fascicularis (Crab-eating macaque).